Here is a 343-residue protein sequence, read N- to C-terminus: tRNA N6-adenosine threonylcarbamoyltransferase (343 aa).

Fe cation contacts are provided by His-116 and His-120. Substrate is bound by residues 139–143 (TVSGG), Asp-172, Gly-185, Asp-189, and Asn-280. Asp-308 is a binding site for Fe cation.

This sequence belongs to the KAE1 / TsaD family. Requires Fe(2+) as cofactor.

It is found in the cytoplasm. It catalyses the reaction L-threonylcarbamoyladenylate + adenosine(37) in tRNA = N(6)-L-threonylcarbamoyladenosine(37) in tRNA + AMP + H(+). In terms of biological role, required for the formation of a threonylcarbamoyl group on adenosine at position 37 (t(6)A37) in tRNAs that read codons beginning with adenine. Is involved in the transfer of the threonylcarbamoyl moiety of threonylcarbamoyl-AMP (TC-AMP) to the N6 group of A37, together with TsaE and TsaB. TsaD likely plays a direct catalytic role in this reaction. This Cytophaga hutchinsonii (strain ATCC 33406 / DSM 1761 / CIP 103989 / NBRC 15051 / NCIMB 9469 / D465) protein is tRNA N6-adenosine threonylcarbamoyltransferase.